Here is a 191-residue protein sequence, read N- to C-terminus: Flagellar transcriptional regulator FlhC (191 aa).

Zn(2+) is bound by residues cysteine 137, cysteine 140, cysteine 157, and cysteine 160.

The protein belongs to the FlhC family. Heterohexamer composed of two FlhC and four FlhD subunits. Each FlhC binds a FlhD dimer, forming a heterotrimer, and a hexamer assembles by dimerization of two heterotrimers. Requires Zn(2+) as cofactor.

The protein resides in the cytoplasm. Its function is as follows. Functions in complex with FlhD as a master transcriptional regulator that regulates transcription of several flagellar and non-flagellar operons by binding to their promoter region. Activates expression of class 2 flagellar genes, including fliA, which is a flagellum-specific sigma factor that turns on the class 3 genes. Also regulates genes whose products function in a variety of physiological pathways. This chain is Flagellar transcriptional regulator FlhC, found in Nitrosomonas eutropha (strain DSM 101675 / C91 / Nm57).